The chain runs to 360 residues: Phosphate acyltransferase (360 aa).

It belongs to the PlsX family. Homodimer. Probably interacts with PlsY.

It is found in the cytoplasm. The enzyme catalyses a fatty acyl-[ACP] + phosphate = an acyl phosphate + holo-[ACP]. It functions in the pathway lipid metabolism; phospholipid metabolism. Functionally, catalyzes the reversible formation of acyl-phosphate (acyl-PO(4)) from acyl-[acyl-carrier-protein] (acyl-ACP). This enzyme utilizes acyl-ACP as fatty acyl donor, but not acyl-CoA. The polypeptide is Phosphate acyltransferase (Thermobifida fusca (strain YX)).